Consider the following 420-residue polypeptide: Glutamate dehydrogenase (420 aa).

Lys-105 is an active-site residue. NAD(+) is bound at residue 220–226 (GYGNAGY).

The protein belongs to the Glu/Leu/Phe/Val dehydrogenases family. As to quaternary structure, homohexamer.

The protein localises to the cytoplasm. The enzyme catalyses L-glutamate + NAD(+) + H2O = 2-oxoglutarate + NH4(+) + NADH + H(+). It carries out the reaction L-glutamate + NADP(+) + H2O = 2-oxoglutarate + NH4(+) + NADPH + H(+). The chain is Glutamate dehydrogenase (gdhA) from Pyrococcus horikoshii (strain ATCC 700860 / DSM 12428 / JCM 9974 / NBRC 100139 / OT-3).